The chain runs to 140 residues: ATP synthase epsilon chain (140 aa).

The protein belongs to the ATPase epsilon chain family. In terms of assembly, F-type ATPases have 2 components, CF(1) - the catalytic core - and CF(0) - the membrane proton channel. CF(1) has five subunits: alpha(3), beta(3), gamma(1), delta(1), epsilon(1). CF(0) has three main subunits: a, b and c.

It localises to the cell inner membrane. Functionally, produces ATP from ADP in the presence of a proton gradient across the membrane. The protein is ATP synthase epsilon chain of Marinobacter nauticus (strain ATCC 700491 / DSM 11845 / VT8) (Marinobacter aquaeolei).